We begin with the raw amino-acid sequence, 336 residues long: tRNA(Ile)-lysidine synthase (336 aa).

Residue 21–26 (SGGLDS) coordinates ATP.

It belongs to the tRNA(Ile)-lysidine synthase family.

Its subcellular location is the cytoplasm. It catalyses the reaction cytidine(34) in tRNA(Ile2) + L-lysine + ATP = lysidine(34) in tRNA(Ile2) + AMP + diphosphate + H(+). Ligates lysine onto the cytidine present at position 34 of the AUA codon-specific tRNA(Ile) that contains the anticodon CAU, in an ATP-dependent manner. Cytidine is converted to lysidine, thus changing the amino acid specificity of the tRNA from methionine to isoleucine. In Helicobacter pylori (strain ATCC 700392 / 26695) (Campylobacter pylori), this protein is tRNA(Ile)-lysidine synthase.